A 2163-amino-acid polypeptide reads, in one-letter code: Myosin-VIIa (2163 aa).

The Myosin motor domain occupies 58–728; it reads QGVEDMISLG…HDLFLEQERD (671 aa). Residue 151–158 coordinates ATP; sequence GESGAGKT. Actin-binding stretches follow at residues 607–629 and 707–721; these read LDSL…KPNE and QLGH…AHDL. 4 consecutive IQ domains span residues 731 to 753, 754 to 783, 800 to 822, and 823 to 852; these read LTRK…RFLR, MRQA…GYMR, LRGH…EYGL, and KMWA…EYRR. Positions 886 to 914 form a coiled coil; that stretch reads RLNEIERKEIEQELEERRRVEVKKNIIND. The segment at 937–958 is disordered; it reads PDSSSEAPTPHGGRETSVFNDL. The MyTH4 1 domain occupies 1003–1239; sequence YSRKPLKHPL…PSWLELQATK (237 aa). In terms of domain architecture, FERM 1 spans 1244–1554; that stretch reads IMLPITFMDG…YFLEGLKKRS (311 aa). The SH3 domain occupies 1552 to 1621; sequence KRSKFVIALQ…PAEIVYVLPS (70 aa). Residues 1697–1845 enclose the MyTH4 2 domain; sequence YSREPLKQPL…PHQVEVEAIQ (149 aa). Positions 1851-2154 constitute an FERM 2 domain; the sequence is IFHKVYFPDD…SYISLMLTNM (304 aa).

The protein belongs to the TRAFAC class myosin-kinesin ATPase superfamily. Myosin family. As to quaternary structure, homodimerizes in a two headed molecule through the formation of a coiled-coil rod.

It is found in the cytoplasm. Its function is as follows. Myosins are actin-based motor molecules with ATPase activity. Unconventional myosins serve in intracellular movements: can function in cells as a single-molecule cargo transporter. A very slow and high-duty-ratio motor, may be suitable for tension maintenance of actin filaments. Their highly divergent tails are presumed to bind to membranous compartments, which would be moved relative to actin filaments. Plays a key role in the formation of cellular projections and other actin-based functions required for embryonic and larval viability. Necessary for auditory transduction: plays a role in Johnston organ (JO) organization by functioning in scolopidial apical attachment and therefore to acoustic stimulus propagation from the antenna a2/a3 joint to transducing elements. The chain is Myosin-VIIa from Aedes aegypti (Yellowfever mosquito).